A 357-amino-acid chain; its full sequence is 3-isopropylmalate dehydrogenase (357 aa).

The substrate site is built by Arg-97, Arg-107, Arg-135, and Asp-224. 3 residues coordinate Mg(2+): Asp-224, Asp-248, and Asp-252. NAD(+) is bound at residue 282–294; the sequence is GSAPDIAGKNIAN.

The protein belongs to the isocitrate and isopropylmalate dehydrogenases family. LeuB type 1 subfamily. Homodimer. Mg(2+) serves as cofactor. It depends on Mn(2+) as a cofactor.

The protein localises to the cytoplasm. The enzyme catalyses (2R,3S)-3-isopropylmalate + NAD(+) = 4-methyl-2-oxopentanoate + CO2 + NADH. It functions in the pathway amino-acid biosynthesis; L-leucine biosynthesis; L-leucine from 3-methyl-2-oxobutanoate: step 3/4. In terms of biological role, catalyzes the oxidation of 3-carboxy-2-hydroxy-4-methylpentanoate (3-isopropylmalate) to 3-carboxy-4-methyl-2-oxopentanoate. The product decarboxylates to 4-methyl-2 oxopentanoate. This chain is 3-isopropylmalate dehydrogenase, found in Prochlorococcus marinus (strain MIT 9312).